Here is an 89-residue protein sequence, read N- to C-terminus: NAD(P)H-quinone oxidoreductase subunit L (89 aa).

A run of 2 helical transmembrane segments spans residues 29-46 and 59-79; these read VLGG…FYWM and LFIY…APFL.

This sequence belongs to the complex I NdhL subunit family. In terms of assembly, NDH-1 can be composed of about 15 different subunits; different subcomplexes with different compositions have been identified which probably have different functions.

The protein resides in the cellular thylakoid membrane. It catalyses the reaction a plastoquinone + NADH + (n+1) H(+)(in) = a plastoquinol + NAD(+) + n H(+)(out). It carries out the reaction a plastoquinone + NADPH + (n+1) H(+)(in) = a plastoquinol + NADP(+) + n H(+)(out). Its function is as follows. NDH-1 shuttles electrons from an unknown electron donor, via FMN and iron-sulfur (Fe-S) centers, to quinones in the respiratory and/or the photosynthetic chain. The immediate electron acceptor for the enzyme in this species is believed to be plastoquinone. Couples the redox reaction to proton translocation, and thus conserves the redox energy in a proton gradient. Cyanobacterial NDH-1 also plays a role in inorganic carbon-concentration. This Prochlorococcus marinus (strain NATL1A) protein is NAD(P)H-quinone oxidoreductase subunit L.